Reading from the N-terminus, the 392-residue chain is Multidrug resistance protein MdtL (392 aa).

12 consecutive transmembrane segments (helical) span residues 4 to 24 (FLLC…MYLV), 38 to 58 (AQLH…MLFA), 70 to 90 (VAIV…QAHA), 95 to 115 (LVGR…AFAI), 131 to 151 (LLNG…HLIM), 158 to 178 (SLFY…VFIL), 209 to 229 (ILIT…SPVL), 246 to 266 (ALMA…LSLF), 270 to 290 (TLML…SLAT), 294 to 314 (LTLI…GVAM), 331 to 351 (VLGI…AIIG), and 357 to 377 (MLIG…LVVT).

It belongs to the major facilitator superfamily. DHA1 family. MdtL (TC 2.A.1.2.22) subfamily.

The protein resides in the cell inner membrane. The polypeptide is Multidrug resistance protein MdtL (Klebsiella pneumoniae (strain 342)).